Here is a 372-residue protein sequence, read N- to C-terminus: MHC class I-like protein MILL2 (372 aa).

The first 26 residues, 1–26 (MEASSGTAGPAVLLLILALLLTESQG), serve as a signal peptide directing secretion. The alpha-1 stretch occupies residues 28–119 (RSQGTHTLRY…MINQKGHDKG (92 aa)). Disulfide bonds link C78–C89, C129–C191, and C230–C287. An alpha-2 region spans residues 120 to 210 (PYTLQATLDC…SLSNVLPDTG (91 aa)). N-linked (GlcNAc...) asparagine glycans are attached at residues N134, N234, and N293. The 111-residue stretch at 192 to 302 (PARLQRHLAS…NRTIMQTAVS (111 aa)) folds into the Ig-like C1-type domain. An alpha-3 region spans residues 211–339 (SPVVIVTCRN…VVDGGLVTGN (129 aa)). The interval 308-349 (WPSASWATRQEAEGPHRTHNDHVVDGGLVTGNANKDSPDASS) is disordered. A compositionally biased stretch (basic and acidic residues) spans 317-331 (QEAEGPHRTHNDHVV). The connecting peptide stretch occupies residues 340–348 (ANKDSPDAS). S349 is lipidated: GPI-anchor amidated serine. The propeptide at 350–372 (CATASAISAFPVVVLSVALPRAN) is removed in mature form.

It belongs to the MHC class I family. As to quaternary structure, heterodimer with B2M. As to expression, ubiquitously expressed in neonatal and adult tissues.

Its subcellular location is the cell membrane. In terms of biological role, binds to heparan sulfate proteoglycans on the surface of fibroblast cells. This is MHC class I-like protein MILL2 from Rattus norvegicus (Rat).